The sequence spans 529 residues: Bifunctional purine biosynthesis protein PurH (529 aa).

Residues 1–148 form the MGS-like domain; the sequence is MQQRRSVRRA…KNHKDVAIVV (148 aa).

This sequence belongs to the PurH family.

The enzyme catalyses (6R)-10-formyltetrahydrofolate + 5-amino-1-(5-phospho-beta-D-ribosyl)imidazole-4-carboxamide = 5-formamido-1-(5-phospho-D-ribosyl)imidazole-4-carboxamide + (6S)-5,6,7,8-tetrahydrofolate. It catalyses the reaction IMP + H2O = 5-formamido-1-(5-phospho-D-ribosyl)imidazole-4-carboxamide. It participates in purine metabolism; IMP biosynthesis via de novo pathway; 5-formamido-1-(5-phospho-D-ribosyl)imidazole-4-carboxamide from 5-amino-1-(5-phospho-D-ribosyl)imidazole-4-carboxamide (10-formyl THF route): step 1/1. It functions in the pathway purine metabolism; IMP biosynthesis via de novo pathway; IMP from 5-formamido-1-(5-phospho-D-ribosyl)imidazole-4-carboxamide: step 1/1. The protein is Bifunctional purine biosynthesis protein PurH of Salmonella arizonae (strain ATCC BAA-731 / CDC346-86 / RSK2980).